The primary structure comprises 440 residues: 3-phosphoshikimate 1-carboxyvinyltransferase (440 aa).

Residues Lys-31, Ser-32, and Arg-36 each contribute to the 3-phosphoshikimate site. Position 31 (Lys-31) interacts with phosphoenolpyruvate. Phosphoenolpyruvate is bound by residues Gly-104 and Arg-133. 3-phosphoshikimate contacts are provided by Ser-178, Gln-180, Asp-328, and Lys-355. Residue Gln-180 coordinates phosphoenolpyruvate. Asp-328 (proton acceptor) is an active-site residue. 2 residues coordinate phosphoenolpyruvate: Arg-359 and Arg-401.

This sequence belongs to the EPSP synthase family. Monomer.

It localises to the cytoplasm. The catalysed reaction is 3-phosphoshikimate + phosphoenolpyruvate = 5-O-(1-carboxyvinyl)-3-phosphoshikimate + phosphate. Its pathway is metabolic intermediate biosynthesis; chorismate biosynthesis; chorismate from D-erythrose 4-phosphate and phosphoenolpyruvate: step 6/7. Catalyzes the transfer of the enolpyruvyl moiety of phosphoenolpyruvate (PEP) to the 5-hydroxyl of shikimate-3-phosphate (S3P) to produce enolpyruvyl shikimate-3-phosphate and inorganic phosphate. In Thermosynechococcus vestitus (strain NIES-2133 / IAM M-273 / BP-1), this protein is 3-phosphoshikimate 1-carboxyvinyltransferase.